Here is a 62-residue protein sequence, read N- to C-terminus: Large ribosomal subunit protein uL30 (62 aa).

It belongs to the universal ribosomal protein uL30 family. As to quaternary structure, part of the 50S ribosomal subunit.

The protein is Large ribosomal subunit protein uL30 of Hydrogenovibrio crunogenus (strain DSM 25203 / XCL-2) (Thiomicrospira crunogena).